A 448-amino-acid polypeptide reads, in one-letter code: Probable glycine dehydrogenase (decarboxylating) subunit 1 (448 aa).

Belongs to the GcvP family. N-terminal subunit subfamily. In terms of assembly, the glycine cleavage system is composed of four proteins: P, T, L and H. In this organism, the P 'protein' is a heterodimer of two subunits.

The enzyme catalyses N(6)-[(R)-lipoyl]-L-lysyl-[glycine-cleavage complex H protein] + glycine + H(+) = N(6)-[(R)-S(8)-aminomethyldihydrolipoyl]-L-lysyl-[glycine-cleavage complex H protein] + CO2. Functionally, the glycine cleavage system catalyzes the degradation of glycine. The P protein binds the alpha-amino group of glycine through its pyridoxal phosphate cofactor; CO(2) is released and the remaining methylamine moiety is then transferred to the lipoamide cofactor of the H protein. The polypeptide is Probable glycine dehydrogenase (decarboxylating) subunit 1 (Geobacillus thermodenitrificans (strain NG80-2)).